The sequence spans 503 residues: ATP synthase subunit alpha (503 aa).

170-177 (GDRKTGKT) contributes to the ATP binding site.

It belongs to the ATPase alpha/beta chains family. In terms of assembly, F-type ATPases have 2 components, CF(1) - the catalytic core - and CF(0) - the membrane proton channel. CF(1) has five subunits: alpha(3), beta(3), gamma(1), delta(1), epsilon(1). CF(0) has four main subunits: a, b, b' and c.

It localises to the cellular thylakoid membrane. It carries out the reaction ATP + H2O + 4 H(+)(in) = ADP + phosphate + 5 H(+)(out). Functionally, produces ATP from ADP in the presence of a proton gradient across the membrane. The alpha chain is a regulatory subunit. This is ATP synthase subunit alpha from Rippkaea orientalis (strain PCC 8801 / RF-1) (Cyanothece sp. (strain PCC 8801)).